The sequence spans 481 residues: Probable glycine dehydrogenase (decarboxylating) subunit 2 (481 aa).

The interval Met-1–Ile-26 is disordered. Position 263 is an N6-(pyridoxal phosphate)lysine (Lys-263).

Belongs to the GcvP family. C-terminal subunit subfamily. In terms of assembly, the glycine cleavage system is composed of four proteins: P, T, L and H. In this organism, the P 'protein' is a heterodimer of two subunits. Requires pyridoxal 5'-phosphate as cofactor.

The enzyme catalyses N(6)-[(R)-lipoyl]-L-lysyl-[glycine-cleavage complex H protein] + glycine + H(+) = N(6)-[(R)-S(8)-aminomethyldihydrolipoyl]-L-lysyl-[glycine-cleavage complex H protein] + CO2. Functionally, the glycine cleavage system catalyzes the degradation of glycine. The P protein binds the alpha-amino group of glycine through its pyridoxal phosphate cofactor; CO(2) is released and the remaining methylamine moiety is then transferred to the lipoamide cofactor of the H protein. The polypeptide is Probable glycine dehydrogenase (decarboxylating) subunit 2 (Francisella tularensis subsp. mediasiatica (strain FSC147)).